We begin with the raw amino-acid sequence, 471 residues long: Glutamate--tRNA ligase 1 (471 aa).

A 'HIGH' region motif is present at residues 15–25 (PSPTGYLHIGG). Residues 243-247 (KLSKR) carry the 'KMSKS' region motif. Position 246 (lysine 246) interacts with ATP.

The protein belongs to the class-I aminoacyl-tRNA synthetase family. Glutamate--tRNA ligase type 1 subfamily. Monomer.

It localises to the cytoplasm. The enzyme catalyses tRNA(Glu) + L-glutamate + ATP = L-glutamyl-tRNA(Glu) + AMP + diphosphate. In terms of biological role, catalyzes the attachment of glutamate to tRNA(Glu) in a two-step reaction: glutamate is first activated by ATP to form Glu-AMP and then transferred to the acceptor end of tRNA(Glu). This chain is Glutamate--tRNA ligase 1, found in Dinoroseobacter shibae (strain DSM 16493 / NCIMB 14021 / DFL 12).